Reading from the N-terminus, the 185-residue chain is Ribosome-recycling factor (185 aa).

It belongs to the RRF family.

The protein localises to the cytoplasm. Functionally, responsible for the release of ribosomes from messenger RNA at the termination of protein biosynthesis. May increase the efficiency of translation by recycling ribosomes from one round of translation to another. The chain is Ribosome-recycling factor from Clostridium botulinum (strain Alaska E43 / Type E3).